A 396-amino-acid polypeptide reads, in one-letter code: Argininosuccinate synthase (396 aa).

9-17 is a binding site for ATP; that stretch reads AFSGGLDTT. Residue Tyr-86 coordinates L-citrulline. Residue Gly-116 coordinates ATP. Residues Thr-118, Asn-122, and Asp-123 each coordinate L-aspartate. Asn-122 serves as a coordination point for L-citrulline. Arg-126, Ser-172, Ser-181, Glu-254, and Tyr-266 together coordinate L-citrulline.

This sequence belongs to the argininosuccinate synthase family. Type 1 subfamily. In terms of assembly, homotetramer.

It localises to the cytoplasm. It carries out the reaction L-citrulline + L-aspartate + ATP = 2-(N(omega)-L-arginino)succinate + AMP + diphosphate + H(+). Its pathway is amino-acid biosynthesis; L-arginine biosynthesis; L-arginine from L-ornithine and carbamoyl phosphate: step 2/3. This is Argininosuccinate synthase from Halobacterium salinarum (strain ATCC 700922 / JCM 11081 / NRC-1) (Halobacterium halobium).